A 514-amino-acid polypeptide reads, in one-letter code: Histidine ammonia-lyase (514 aa).

A cross-link (5-imidazolinone (Ala-Gly)) is located at residues 146-148 (ASG). Serine 147 is subject to 2,3-didehydroalanine (Ser).

It belongs to the PAL/histidase family. In terms of processing, contains an active site 4-methylidene-imidazol-5-one (MIO), which is formed autocatalytically by cyclization and dehydration of residues Ala-Ser-Gly.

Its subcellular location is the cytoplasm. It carries out the reaction L-histidine = trans-urocanate + NH4(+). It functions in the pathway amino-acid degradation; L-histidine degradation into L-glutamate; N-formimidoyl-L-glutamate from L-histidine: step 1/3. This is Histidine ammonia-lyase from Clostridium tetani (strain Massachusetts / E88).